The chain runs to 145 residues: Cystatin-F (145 aa).

Positions 1 to 19 are cleaved as a signal peptide; that stretch reads MRAAGTLLAFCCLVLSTTG. N-linked (GlcNAc...) asparagine glycosylation occurs at N62. Residues 81–85 carry the Secondary area of contact motif; it reads QIVKG. C99 and C110 form a disulfide bridge. The N-linked (GlcNAc...) asparagine glycan is linked to N115. C124 and C144 are oxidised to a cystine.

This sequence belongs to the cystatin family. Homodimer; disulfide-linked. In terms of tissue distribution, primarily expressed in peripheral blood cells and spleen.

It localises to the secreted. Its subcellular location is the cytoplasm. Functionally, inhibits papain and cathepsin L but with affinities lower than other cystatins. May play a role in immune regulation through inhibition of a unique target in the hematopoietic system. This chain is Cystatin-F (CST7), found in Homo sapiens (Human).